The chain runs to 102 residues: MSDQATTLRIKPLGDRILVKREEEEATARGGIILPDTAKKKQDRAEVLVLGTGKRTDDGTLLPFEVQVGDIILMDKYAGQEITIDDEEYVILQSSEIMAVLK.

It belongs to the GroES chaperonin family. As to quaternary structure, heptamer of 7 subunits arranged in a ring. Interacts with the chaperonin GroEL.

The protein resides in the cytoplasm. Together with the chaperonin GroEL, plays an essential role in assisting protein folding. The GroEL-GroES system forms a nano-cage that allows encapsulation of the non-native substrate proteins and provides a physical environment optimized to promote and accelerate protein folding. GroES binds to the apical surface of the GroEL ring, thereby capping the opening of the GroEL channel. This Chlamydia pneumoniae (Chlamydophila pneumoniae) protein is Co-chaperonin GroES.